The following is a 403-amino-acid chain: Betaine--homocysteine S-methyltransferase 1 (403 aa).

A Hcy-binding domain is found at 8-311 (KGLLERLDAG…YHTRAIAEEL (304 aa)). Cys-214, Cys-296, and Cys-297 together coordinate Zn(2+).

As to quaternary structure, homotetramer. It depends on Zn(2+) as a cofactor.

It localises to the cytoplasm. It catalyses the reaction L-homocysteine + glycine betaine = N,N-dimethylglycine + L-methionine. The protein operates within amine and polyamine degradation; betaine degradation; sarcosine from betaine: step 1/2. It functions in the pathway amino-acid biosynthesis; L-methionine biosynthesis via de novo pathway; L-methionine from L-homocysteine (BhmT route): step 1/1. In terms of biological role, involved in the regulation of homocysteine metabolism. Converts betaine and homocysteine to dimethylglycine and methionine, respectively. This reaction is also required for the irreversible oxidation of choline. The sequence is that of Betaine--homocysteine S-methyltransferase 1 (bhmt) from Xenopus tropicalis (Western clawed frog).